Consider the following 118-residue polypeptide: uncharacterized protein (118 aa).

Residues 98 to 118 (KGKGNEGREEAEEPLEEPEEG) form a disordered region. The segment covering 106–118 (EEAEEPLEEPEEG) has biased composition (acidic residues).

This sequence belongs to the UPF0440 family.

This is an uncharacterized protein from Pyrococcus abyssi (strain GE5 / Orsay).